Here is a 135-residue protein sequence, read N- to C-terminus: UPF0299 membrane protein YE2790 (135 aa).

The next 4 membrane-spanning stretches (helical) occupy residues 4–24 (VTSL…CLWA), 30–50 (LLLP…FALL), 63–83 (GCHL…VGVM), and 93–113 (FGPI…VVGY).

Belongs to the UPF0299 family.

It is found in the cell inner membrane. The chain is UPF0299 membrane protein YE2790 from Yersinia enterocolitica serotype O:8 / biotype 1B (strain NCTC 13174 / 8081).